The chain runs to 508 residues: Ankyrin repeat domain-containing protein 34B (508 aa).

4 ANK repeats span residues 9–38, 42–79, 83–113, and 117–146; these read TDGN…YINE, RGET…DPNI, SGKS…DLSL, and SGYS…AKGK. Residues 157–185 form a disordered region; that stretch reads PSGRHTTQHHLNMPPADMDGSHPPATPSE. At Ser260 the chain carries Phosphoserine. A Phosphothreonine modification is found at Thr269. Residue Ser293 is modified to Phosphoserine. The segment covering 361–370 has biased composition (polar residues); that stretch reads GANHYSSDSQ. The disordered stretch occupies residues 361 to 380; it reads GANHYSSDSQLAEGVTPPTV.

This sequence belongs to the ANKRD34 family. Post-translationally, phosphorylated. As to expression, specifically and constitutively expressed in brain (at protein level).

It is found in the cytoplasm. The protein resides in the nucleus. This is Ankyrin repeat domain-containing protein 34B (Ankrd34b) from Mus musculus (Mouse).